The sequence spans 476 residues: Chromosomal replication initiator protein DnaA (476 aa).

A domain I, interacts with DnaA modulators region spans residues 1–75; it reads MLAPDTFWLA…TQMAENHFAR (75 aa). Residues 75–139 form a domain II region; it reads RPVQLQLELA…AKEKQEKNPT (65 aa). The segment at 110 to 141 is disordered; sequence FDAPTESAQKAPKDTKDTKDAKEKQEKNPTRL. Over residues 120–138 the composition is skewed to basic and acidic residues; it reads APKDTKDTKDAKEKQEKNP. The segment at 140-356 is domain III, AAA+ region; it reads RLNPSFTFNT…GALKRVVAYS (217 aa). Gly184, Gly186, Lys187, and Thr188 together coordinate ATP. Positions 357–476 are domain IV, binds dsDNA; the sequence is RFTGHALTLD…FNTLLHILRG (120 aa).

Belongs to the DnaA family. In terms of assembly, oligomerizes as a right-handed, spiral filament on DNA at oriC.

It localises to the cytoplasm. Functionally, plays an essential role in the initiation and regulation of chromosomal replication. ATP-DnaA binds to the origin of replication (oriC) to initiate formation of the DNA replication initiation complex once per cell cycle. Binds the DnaA box (a 9 base pair repeat at the origin) and separates the double-stranded (ds)DNA. Forms a right-handed helical filament on oriC DNA; dsDNA binds to the exterior of the filament while single-stranded (ss)DNA is stabiized in the filament's interior. The ATP-DnaA-oriC complex binds and stabilizes one strand of the AT-rich DNA unwinding element (DUE), permitting loading of DNA polymerase. After initiation quickly degrades to an ADP-DnaA complex that is not apt for DNA replication. Binds acidic phospholipids. The polypeptide is Chromosomal replication initiator protein DnaA (Nitrosospira multiformis (strain ATCC 25196 / NCIMB 11849 / C 71)).